A 460-amino-acid chain; its full sequence is 7-cyano-7-deazaguanine synthase 2 (460 aa).

Cys2 serves as the catalytic For GATase activity. The region spanning Cys2–Asn225 is the Glutamine amidotransferase type-2 domain. Residue Ala245–Ala255 coordinates ATP. Residues Cys426, Cys434, Cys437, and Cys440 each contribute to the Zn(2+) site.

This sequence belongs to the QueC family. The cofactor is Zn(2+).

The enzyme catalyses 7-carboxy-7-deazaguanine + NH4(+) + ATP = 7-cyano-7-deazaguanine + ADP + phosphate + H2O + H(+). It functions in the pathway purine metabolism; 7-cyano-7-deazaguanine biosynthesis. Catalyzes the ATP-dependent conversion of 7-carboxy-7-deazaguanine (CDG) to 7-cyano-7-deazaguanine (preQ(0)). The protein is 7-cyano-7-deazaguanine synthase 2 (queC2) of Sulfurisphaera tokodaii (strain DSM 16993 / JCM 10545 / NBRC 100140 / 7) (Sulfolobus tokodaii).